A 343-amino-acid chain; its full sequence is Holliday junction branch migration complex subunit RuvB (343 aa).

The large ATPase domain (RuvB-L) stretch occupies residues 1 to 186 (MTEEFDIRQE…FGINLHLEYY (186 aa)). ATP-binding positions include L25, R26, G67, K70, T71, T72, 133 to 135 (EDY), R176, Y186, and R223. Residue T71 participates in Mg(2+) binding. Residues 187-257 (DVHTITGIVE…IACYALEALN (71 aa)) are small ATPAse domain (RuvB-S). A head domain (RuvB-H) region spans residues 260 to 343 (RYGLDNVDHK…PRPHRPSLFD (84 aa)). The DNA site is built by R315 and R320.

This sequence belongs to the RuvB family. In terms of assembly, homohexamer. Forms an RuvA(8)-RuvB(12)-Holliday junction (HJ) complex. HJ DNA is sandwiched between 2 RuvA tetramers; dsDNA enters through RuvA and exits via RuvB. An RuvB hexamer assembles on each DNA strand where it exits the tetramer. Each RuvB hexamer is contacted by two RuvA subunits (via domain III) on 2 adjacent RuvB subunits; this complex drives branch migration. In the full resolvosome a probable DNA-RuvA(4)-RuvB(12)-RuvC(2) complex forms which resolves the HJ.

The protein resides in the cytoplasm. The catalysed reaction is ATP + H2O = ADP + phosphate + H(+). In terms of biological role, the RuvA-RuvB-RuvC complex processes Holliday junction (HJ) DNA during genetic recombination and DNA repair, while the RuvA-RuvB complex plays an important role in the rescue of blocked DNA replication forks via replication fork reversal (RFR). RuvA specifically binds to HJ cruciform DNA, conferring on it an open structure. The RuvB hexamer acts as an ATP-dependent pump, pulling dsDNA into and through the RuvAB complex. RuvB forms 2 homohexamers on either side of HJ DNA bound by 1 or 2 RuvA tetramers; 4 subunits per hexamer contact DNA at a time. Coordinated motions by a converter formed by DNA-disengaged RuvB subunits stimulates ATP hydrolysis and nucleotide exchange. Immobilization of the converter enables RuvB to convert the ATP-contained energy into a lever motion, pulling 2 nucleotides of DNA out of the RuvA tetramer per ATP hydrolyzed, thus driving DNA branch migration. The RuvB motors rotate together with the DNA substrate, which together with the progressing nucleotide cycle form the mechanistic basis for DNA recombination by continuous HJ branch migration. Branch migration allows RuvC to scan DNA until it finds its consensus sequence, where it cleaves and resolves cruciform DNA. This chain is Holliday junction branch migration complex subunit RuvB, found in Porphyromonas gingivalis (strain ATCC BAA-308 / W83).